Reading from the N-terminus, the 105-residue chain is Nucleoid-associated protein Lm4b_02677 (105 aa).

Residues 1-16 show a composition bias toward low complexity; sequence MRGMGNMQGMMKQMQK. The disordered stretch occupies residues 1 to 23; that stretch reads MRGMGNMQGMMKQMQKMQKEMAK.

The protein belongs to the YbaB/EbfC family. As to quaternary structure, homodimer.

The protein resides in the cytoplasm. It localises to the nucleoid. Its function is as follows. Binds to DNA and alters its conformation. May be involved in regulation of gene expression, nucleoid organization and DNA protection. The polypeptide is Nucleoid-associated protein Lm4b_02677 (Listeria monocytogenes serotype 4b (strain CLIP80459)).